The following is a 161-amino-acid chain: Nucleotide-binding protein Lferr_1091 (161 aa).

It belongs to the YajQ family.

Its function is as follows. Nucleotide-binding protein. The polypeptide is Nucleotide-binding protein Lferr_1091 (Acidithiobacillus ferrooxidans (strain ATCC 53993 / BNL-5-31) (Leptospirillum ferrooxidans (ATCC 53993))).